Here is a 127-residue protein sequence, read N- to C-terminus: Aspartate 1-decarboxylase (127 aa).

Residue Ser25 is the Schiff-base intermediate with substrate; via pyruvic acid of the active site. Ser25 is modified (pyruvic acid (Ser)). Thr57 serves as a coordination point for substrate. Tyr58 acts as the Proton donor in catalysis. 73 to 75 (GAA) is a substrate binding site.

Belongs to the PanD family. In terms of assembly, heterooctamer of four alpha and four beta subunits. Requires pyruvate as cofactor. In terms of processing, is synthesized initially as an inactive proenzyme, which is activated by self-cleavage at a specific serine bond to produce a beta-subunit with a hydroxyl group at its C-terminus and an alpha-subunit with a pyruvoyl group at its N-terminus.

The protein localises to the cytoplasm. It catalyses the reaction L-aspartate + H(+) = beta-alanine + CO2. It participates in cofactor biosynthesis; (R)-pantothenate biosynthesis; beta-alanine from L-aspartate: step 1/1. Its function is as follows. Catalyzes the pyruvoyl-dependent decarboxylation of aspartate to produce beta-alanine. The protein is Aspartate 1-decarboxylase of Bacillus velezensis (strain DSM 23117 / BGSC 10A6 / LMG 26770 / FZB42) (Bacillus amyloliquefaciens subsp. plantarum).